A 240-amino-acid chain; its full sequence is Biosynthetic peptidoglycan transglycosylase (240 aa).

The chain crosses the membrane as a helical span at residues 12–31 (ALLWFAGGSVLLVLVFRFVP).

It belongs to the glycosyltransferase 51 family.

The protein resides in the cell inner membrane. The enzyme catalyses [GlcNAc-(1-&gt;4)-Mur2Ac(oyl-L-Ala-gamma-D-Glu-L-Lys-D-Ala-D-Ala)](n)-di-trans,octa-cis-undecaprenyl diphosphate + beta-D-GlcNAc-(1-&gt;4)-Mur2Ac(oyl-L-Ala-gamma-D-Glu-L-Lys-D-Ala-D-Ala)-di-trans,octa-cis-undecaprenyl diphosphate = [GlcNAc-(1-&gt;4)-Mur2Ac(oyl-L-Ala-gamma-D-Glu-L-Lys-D-Ala-D-Ala)](n+1)-di-trans,octa-cis-undecaprenyl diphosphate + di-trans,octa-cis-undecaprenyl diphosphate + H(+). The protein operates within cell wall biogenesis; peptidoglycan biosynthesis. Its function is as follows. Peptidoglycan polymerase that catalyzes glycan chain elongation from lipid-linked precursors. The sequence is that of Biosynthetic peptidoglycan transglycosylase from Pseudomonas fluorescens (strain Pf0-1).